A 1148-amino-acid polypeptide reads, in one-letter code: Signal transducer and activator of transcription B (1148 aa).

Low complexity predominate over residues 1 to 36 (MEVTNNGSNNSSTIASTNPPTSPSTTSTSKSLPPLS). Disordered regions lie at residues 1–81 (MEVT…NNNN), 93–178 (SSSN…LSSS), 268–312 (NTNN…PSNG), 403–425 (KNNI…NSLL), and 453–645 (YDYN…KTVT). Positions 37-47 (FLNSQWENKQS) are enriched in polar residues. Low complexity-rich tracts occupy residues 48 to 81 (NNNN…NNNN), 106 to 178 (NNNN…LSSS), and 268 to 298 (NTNN…NNNN). Over residues 466–517 (SNSSNNNSSNNNSNNNNNNNSNNNNNIIGSISPPHSSQLQQVSSPQQQQQQQ) the composition is skewed to low complexity. The segment covering 525–541 (SISSGSIKDLINSPNKE) has biased composition (polar residues). Positions 544–557 (SKSQYPSSLSQSSS) are enriched in low complexity. Over residues 561–572 (MDTDVDSTDEFD) the composition is skewed to acidic residues. Low complexity predominate over residues 574-610 (GSNSNNNNNNNNNNNNNNNSNNSNNKKRNNSNNNNLG). Residues 997–1122 (WQNGFIFMFL…TIPVFKREPK (126 aa)) enclose the SH2 domain.

The protein belongs to the transcription factor STAT family. As to quaternary structure, homodimer. Does not form heterodimers with other family members.

The protein resides in the nucleus. Transcription factor that regulates gene expression during development. Required for optimal cell growth. In Dictyostelium discoideum (Social amoeba), this protein is Signal transducer and activator of transcription B (dstB).